The chain runs to 879 residues: mRNA-binding protein PUF3 (879 aa).

A Phosphothreonine modification is found at Thr-83. Ser-207 and Ser-210 each carry phosphoserine. Disordered stretches follow at residues Glu-222–Glu-256, Pro-344–Gln-417, and Lys-443–Tyr-512. The span at Ser-237 to Ser-255 shows a compositional bias: low complexity. Over residues Ser-370–Ser-395 the composition is skewed to pro residues. Composition is skewed to low complexity over residues Gln-398–Gln-417, Asn-449–Asn-463, Thr-472–Asn-491, and His-501–Tyr-512. Positions His-513 to Ala-871 constitute a PUM-HD domain. Pumilio repeat units follow at residues Asp-538–Asn-573, Glu-574–Asp-609, Gln-610–Leu-645, Glu-646–Ser-681, Ser-682–Asn-717, Glu-718–Glu-759, Thr-760–Ser-795, and Asn-807–Ile-844.

It belongs to the PUF3 family.

The protein localises to the mitochondrion outer membrane. The protein resides in the cytoplasm. Its function is as follows. RNA-binding protein involved in post-transcriptional regulation. Negatively regulates expression of COX17 by binding to the 3'-UTR of COX17 mRNA. Promotes decay of COX17 mRNA by enhancing its rate of deadenylation and subsequent turnover. Predominantly binds to mRNAs encoding mitochondrial proteins and localizes them to the vicinity of mitochondria for translation. Regulates mitochondrial biogenesis, motility and morphology. This is mRNA-binding protein PUF3 (PUF3) from Saccharomyces cerevisiae (strain ATCC 204508 / S288c) (Baker's yeast).